Here is a 233-residue protein sequence, read N- to C-terminus: Type IV secretion system protein PtlE homolog (233 aa).

The helical transmembrane segment at Val42–Pro62 threads the bilayer.

It belongs to the virB8 family.

The protein resides in the cell inner membrane. The polypeptide is Type IV secretion system protein PtlE homolog (ptlE) (Bordetella parapertussis (strain 12822 / ATCC BAA-587 / NCTC 13253)).